We begin with the raw amino-acid sequence, 379 residues long: Alcohol dehydrogenase 1 (379 aa).

Positions 47, 49, 69, 99, 102, 105, 113, and 177 each coordinate Zn(2+). Residues Thr-49 and His-69 each contribute to the an alcohol site. Thr-49 is a binding site for NAD(+). Residues 202–207, Asp-226, Arg-231, Thr-272, Val-295, 295–297, Phe-322, and Arg-372 contribute to the NAD(+) site; these read GLGAVG and VGV.

This sequence belongs to the zinc-containing alcohol dehydrogenase family. Homodimer. Zn(2+) serves as cofactor.

It localises to the cytoplasm. It catalyses the reaction a primary alcohol + NAD(+) = an aldehyde + NADH + H(+). It carries out the reaction a secondary alcohol + NAD(+) = a ketone + NADH + H(+). The chain is Alcohol dehydrogenase 1 (ADH1) from Oryza sativa subsp. indica (Rice).